Here is a 369-residue protein sequence, read N- to C-terminus: P2X receptor B (369 aa).

At 1-25 (MTIDWDSILSYNTIKVVRIRDRRLG) the chain is on the cytoplasmic side. Residues 26–46 (ILHLCFLIVIVLYVVVYSAII) form a helical membrane-spanning segment. Residues 47 to 369 (KKGYVTTEEP…DKLYHNIEAL (323 aa)) lie on the Lumenal side of the membrane. The segment at 283 to 296 (RHAIRLIFIQTGVI) is pore-forming motif.

The protein belongs to the P2X receptor family.

It is found in the contractile vacuole membrane. P2X receptors are ATP-gated ion channels that play a role in intracellular calcium signaling. Not required for the purinergic response to extracellular nucleotides. Not essential for osmoregulation. Inward currents are evoked by intracellular ATP and ATP analogs. Insensitive to the P2 receptor antagonists PPADS and suramin, and also copper ions. Inhibited by sodium ions. Permeable to chloride ions. In Dictyostelium discoideum (Social amoeba), this protein is P2X receptor B (p2xB).